A 684-amino-acid chain; its full sequence is UvrABC system protein B (684 aa).

The 389-residue stretch at 32–420 (DGVLRGDRWQ…GGVVVEQLIR (389 aa)) folds into the Helicase ATP-binding domain. Residue 45 to 52 (GVTGSGKT) coordinates ATP. Residues 98–121 (YYDFYQPEAYIPSLDKYIAKDLKI) carry the Beta-hairpin motif. The Helicase C-terminal domain occupies 437–603 (QIDHLLARIR…SIIKSVDQVL (167 aa)). In terms of domain architecture, UVR spans 643-678 (MLMVAEMNAEMQKAAEQTDYEKAAYLRDEILMLQER).

This sequence belongs to the UvrB family. In terms of assembly, forms a heterotetramer with UvrA during the search for lesions. Interacts with UvrC in an incision complex.

Its subcellular location is the cytoplasm. The UvrABC repair system catalyzes the recognition and processing of DNA lesions. A damage recognition complex composed of 2 UvrA and 2 UvrB subunits scans DNA for abnormalities. Upon binding of the UvrA(2)B(2) complex to a putative damaged site, the DNA wraps around one UvrB monomer. DNA wrap is dependent on ATP binding by UvrB and probably causes local melting of the DNA helix, facilitating insertion of UvrB beta-hairpin between the DNA strands. Then UvrB probes one DNA strand for the presence of a lesion. If a lesion is found the UvrA subunits dissociate and the UvrB-DNA preincision complex is formed. This complex is subsequently bound by UvrC and the second UvrB is released. If no lesion is found, the DNA wraps around the other UvrB subunit that will check the other stand for damage. This chain is UvrABC system protein B, found in Chlorobaculum tepidum (strain ATCC 49652 / DSM 12025 / NBRC 103806 / TLS) (Chlorobium tepidum).